The following is a 113-amino-acid chain: Holo-[acyl-carrier-protein] synthase (113 aa).

Mg(2+) contacts are provided by aspartate 8 and glutamate 57.

It belongs to the P-Pant transferase superfamily. AcpS family. Mg(2+) serves as cofactor.

It localises to the cytoplasm. The catalysed reaction is apo-[ACP] + CoA = holo-[ACP] + adenosine 3',5'-bisphosphate + H(+). In terms of biological role, transfers the 4'-phosphopantetheine moiety from coenzyme A to a Ser of acyl-carrier-protein. This is Holo-[acyl-carrier-protein] synthase from Thermodesulfovibrio yellowstonii (strain ATCC 51303 / DSM 11347 / YP87).